Here is a 211-residue protein sequence, read N- to C-terminus: Large ribosomal subunit protein uL3 (211 aa).

Polar residues predominate over residues Gln130–Ser139. A disordered region spans residues Gln130–Thr151. Residue Gln150 is modified to N5-methylglutamine.

Belongs to the universal ribosomal protein uL3 family. As to quaternary structure, part of the 50S ribosomal subunit. Forms a cluster with proteins L14 and L19. Post-translationally, methylated by PrmB.

In terms of biological role, one of the primary rRNA binding proteins, it binds directly near the 3'-end of the 23S rRNA, where it nucleates assembly of the 50S subunit. This is Large ribosomal subunit protein uL3 from Alcanivorax borkumensis (strain ATCC 700651 / DSM 11573 / NCIMB 13689 / SK2).